The primary structure comprises 370 residues: 3-dehydroquinate synthase (370 aa).

Residues 108-112 (GVIGD), 132-133 (TT), Lys-145, and Lys-154 each bind NAD(+). Residues Glu-187, His-249, and His-267 each coordinate Zn(2+).

This sequence belongs to the sugar phosphate cyclases superfamily. Dehydroquinate synthase family. The cofactor is Co(2+). Requires Zn(2+) as cofactor. It depends on NAD(+) as a cofactor.

The protein localises to the cytoplasm. The catalysed reaction is 7-phospho-2-dehydro-3-deoxy-D-arabino-heptonate = 3-dehydroquinate + phosphate. It functions in the pathway metabolic intermediate biosynthesis; chorismate biosynthesis; chorismate from D-erythrose 4-phosphate and phosphoenolpyruvate: step 2/7. Catalyzes the conversion of 3-deoxy-D-arabino-heptulosonate 7-phosphate (DAHP) to dehydroquinate (DHQ). This chain is 3-dehydroquinate synthase, found in Cereibacter sphaeroides (strain ATCC 17023 / DSM 158 / JCM 6121 / CCUG 31486 / LMG 2827 / NBRC 12203 / NCIMB 8253 / ATH 2.4.1.) (Rhodobacter sphaeroides).